The chain runs to 129 residues: Small ribosomal subunit protein uS11 (129 aa).

It belongs to the universal ribosomal protein uS11 family. As to quaternary structure, part of the 30S ribosomal subunit. Interacts with proteins S7 and S18. Binds to IF-3.

In terms of biological role, located on the platform of the 30S subunit, it bridges several disparate RNA helices of the 16S rRNA. Forms part of the Shine-Dalgarno cleft in the 70S ribosome. This is Small ribosomal subunit protein uS11 from Tolumonas auensis (strain DSM 9187 / NBRC 110442 / TA 4).